Reading from the N-terminus, the 712-residue chain is MSNPAVASEHYINRELSWISFNERVLAQALDTRTPLLEQAKFSAIFSNNLDEFFMVRVASLKAQVEAGITKTSADGLTPLQQLLTIRDHLVPLIEQQQDHYRKHLKNQLVEHGVHLLDYEQLNPKERLWIDNYFQTAIFPVLTPLAVDQAHPFPFVSNLSLNIATLILDPETGQQQFARVKIPQKTIPRFVEIPPDLSGINPKPVHTAVPLEQVVAFNLKLLFPGMKIEEHYFFRVTRDADLELRDLEADDLMSAMEQGLHKRRMGGEVVRLEVTNEMPQRVVEMLIEGMAVEEKDLYRIEGLLGLDDLFGLMRLPLEQLKDQPHIGLTAKVLSRSQRRMLEDESIKEEEFKSIFSVIRRKDILLHHPYELFATSVEEFINQAADDPLVMGIKITLYRTSKDSPIIAALIRAAEHGKQVMALVELKARFDEGNNIQWARHLERSGVHVVYGVLGLKTHTKTILVVRKEKERLRSYVHIGTGNYNSKTSRLYTDLGLLSARPELSQDLVELFNYLTGFSKQQSFRRLLVAPVTLRKGMESLILREIEHAREGRGGHIRAKMNALVDPAIISLLYEASQVGVRIELIIRGMCCLYPGRKGFSENISVISIIGRFLEHSRIFWFANDNNPEVYIGSADLMPRNLDRRVEAITPIEEPEQKEHLERLLNLYLNDNREAWDMQSDGSFLQRQPNPNSEEHRAQQQLINLWQQGIPAA.

Asparagine 49 contributes to the ATP binding site. Residues arginine 398 and arginine 428 each coordinate Mg(2+). Residue histidine 458 is the Phosphohistidine intermediate of the active site. Tyrosine 491, arginine 587, and histidine 615 together coordinate ATP.

Belongs to the polyphosphate kinase 1 (PPK1) family. It depends on Mg(2+) as a cofactor. An intermediate of this reaction is the autophosphorylated ppk in which a phosphate is covalently linked to a histidine residue through a N-P bond.

It carries out the reaction [phosphate](n) + ATP = [phosphate](n+1) + ADP. Catalyzes the reversible transfer of the terminal phosphate of ATP to form a long-chain polyphosphate (polyP). The chain is Polyphosphate kinase from Prochlorococcus marinus (strain MIT 9313).